The following is a 111-amino-acid chain: Putative protein YddJ (111 aa).

This is Putative protein YddJ (yddJ) from Escherichia coli (strain K12).